A 752-amino-acid polypeptide reads, in one-letter code: Multifunctional tryptophan biosynthesis protein (752 aa).

The region spanning 3-202 (FTLLIDNYDS…IQMKGGKWGG (200 aa)) is the Glutamine amidotransferase type-1 domain. An L-glutamine-binding site is contributed by 58 to 60 (GPG). The Nucleophile; for GATase activity role is filled by Cys86. 136–137 (SL) contacts L-glutamine. Active-site for GATase activity residues include His176 and Glu178. The segment at 231-495 (ILNRIHAQRL…DTKAFLRSLI (265 aa)) is indole-3-glycerol phosphate synthase. The interval 509–752 (LVKICGIRST…VEAFVKAVRG (244 aa)) is N-(5'-phosphoribosyl)anthranilate isomerase.

It catalyses the reaction N-(5-phospho-beta-D-ribosyl)anthranilate = 1-(2-carboxyphenylamino)-1-deoxy-D-ribulose 5-phosphate. The enzyme catalyses 1-(2-carboxyphenylamino)-1-deoxy-D-ribulose 5-phosphate + H(+) = (1S,2R)-1-C-(indol-3-yl)glycerol 3-phosphate + CO2 + H2O. It carries out the reaction chorismate + L-glutamine = anthranilate + pyruvate + L-glutamate + H(+). It participates in amino-acid biosynthesis; L-tryptophan biosynthesis; L-tryptophan from chorismate: step 1/5. It functions in the pathway amino-acid biosynthesis; L-tryptophan biosynthesis; L-tryptophan from chorismate: step 3/5. The protein operates within amino-acid biosynthesis; L-tryptophan biosynthesis; L-tryptophan from chorismate: step 4/5. In terms of biological role, trifunctional enzyme bearing the Gln amidotransferase (GATase) domain of anthranilate synthase, indole-glycerolphosphate synthase, and phosphoribosylanthranilate isomerase activities. The protein is Multifunctional tryptophan biosynthesis protein (TRP1) of Cryptococcus neoformans var. neoformans serotype D (strain JEC21 / ATCC MYA-565) (Filobasidiella neoformans).